Reading from the N-terminus, the 146-residue chain is Phage-like element PBSX protein XkdJ (146 aa).

This sequence to B.subtilis YqbJ.

This Bacillus subtilis (strain 168) protein is Phage-like element PBSX protein XkdJ (xkdJ).